Here is an 856-residue protein sequence, read N- to C-terminus: DNA mismatch repair protein MutS (856 aa).

Residue 618–625 coordinates ATP; sequence GPNMGGKS.

This sequence belongs to the DNA mismatch repair MutS family.

Functionally, this protein is involved in the repair of mismatches in DNA. It is possible that it carries out the mismatch recognition step. This protein has a weak ATPase activity. In Shewanella baltica (strain OS155 / ATCC BAA-1091), this protein is DNA mismatch repair protein MutS.